The sequence spans 4293 residues: Polycystin-1 (4293 aa).

Residues 1-23 (MPLGAPALLALALGLGLWLGALA) form the signal peptide. Positions 24–67 (GDPGRGCGPCPLPCFCGPAPDAACRVNCSGRWLQTLGPSLRIPA) constitute an LRRNT domain. The Extracellular segment spans residues 24-3066 (GDPGRGCGPC…IFPEPSASIN (3043 aa)). 2 N-linked (GlcNAc...) asparagine glycosylation sites follow: Asn-50 and Asn-89. LRR repeat units lie at residues 68-91 (DATA…VNLS) and 92-113 (ALVE…VFAN). N-linked (GlcNAc...) asparagine glycosylation is found at Asn-116 and Asn-121. One can recognise an LRRCT domain in the interval 125-178 (NPFECNCGLAWLPRWAKEHQVHVVQSEATTCRGPIPLAGQPLLSIPLLDNACGE). The WSC domain occupies 177–271 (GEEYVACLPD…PTLLQHTFPA (95 aa)). N-linked (GlcNAc...) asparagine glycans are attached at residues Asn-187 and Asn-239. The PKD 1 domain maps to 272–359 (SPGATLVGPH…VQVEATPTVL (88 aa)). Residue Asn-370 is glycosylated (N-linked (GlcNAc...) asparagine). Positions 415–530 (GNGHCYRLVA…CSAPHSYVCE (116 aa)) constitute a C-type lectin domain. 2 disulfide bridges follow: Cys-436/Cys-529 and Cys-507/Cys-521. Residues 613 to 632 (GGAAAVPEGSSEPDNRTEPA) form a disordered region. Asn-627 carries N-linked (GlcNAc...) asparagine glycosylation. An LDL-receptor class A; atypical domain is found at 633 to 666 (PKCVPEELWCPGANVCIPFDASCNSHVCINGSVS). Cystine bridges form between Cys-635/Cys-648 and Cys-642/Cys-660. N-linked (GlcNAc...) asparagine glycans are attached at residues Asn-662, Asn-740, Asn-804, Asn-835, Asn-848, Asn-859, Asn-884, Asn-915, Asn-998, Asn-1004, Asn-1028, Asn-1084, Asn-1096, Asn-1107, Asn-1172, Asn-1188, Asn-1234, Asn-1263, Asn-1330, Asn-1342, Asn-1376, Asn-1444, Asn-1449, Asn-1468, Asn-1535, Asn-1548, Asn-1557, Asn-1643, Asn-1657, Asn-1706, Asn-1730, Asn-1788, Asn-1831, Asn-1863, and Asn-1876. PKD domains follow at residues 849–922 (ATAT…RVTA), 929–1014 (LRAV…NKMH), 1017–1123 (WVSA…LPNV), 1121–1209 (PNVA…LHGL), 1207–1292 (HGLT…EVLH), 1288–1377 (LEVL…IRNI), 1376–1463 (NITL…VLVT), 1462–1545 (VTGI…VRGL), 1544–1629 (GLTI…IEGL), 1630–1718 (QVAG…VESL), 1716–1802 (ESLI…VGGL), 1804–1886 (IRTS…IVNL), 1885–1970 (NLML…VVGL), 1972–2053 (VPNC…MVEV), and 2056–2144 (IIQY…ACRE). Residues Asn-1987, Asn-2046, Asn-2070, Asn-2121, Asn-2244, Asn-2349, Asn-2391, Asn-2408, Asn-2414, Asn-2563, Asn-2640, Asn-2713, Asn-2749, Asn-2813, Asn-2836, Asn-2873, Asn-2948, and Asn-2986 are each glycosylated (N-linked (GlcNAc...) asparagine). The region spanning 2142 to 2828 (CREPEVEVAL…QLIFLVDSNP (687 aa)) is the REJ domain. The 199-residue stretch at 2857–3055 (PIEQLAAERA…SLFVPPSHVQ (199 aa)) folds into the GAIN-B domain. A disulfide bond links Cys-3007 and Cys-3035. Positions 3007-3055 (CQYFSEEMMMWRTEGIVPLEETSPSQAVCLTRHLTAFGASLFVPPSHVQ) are GPS. The chain crosses the membrane as a helical span at residues 3067-3087 (YIVLLTCVICLVTYVVMAMIL). Topologically, residues 3088–3269 (RKLDQLDVSR…DRPPRSRFTR (182 aa)) are cytoplasmic. Residues 3110-3225 (FKYEILVKTG…EANGGLVEKE (116 aa)) enclose the PLAT domain. A helical transmembrane segment spans residues 3270–3290 (VQRVTCCVLLLCLFLAANAVW). Residues 3291 to 3315 (YGVVRDTTYSMGPVSSLISPGVDTV) are Extracellular-facing. The chain crosses the membrane as a helical span at residues 3316-3336 (AIGLVSSVVVYPVYLAVLFLF). The Cytoplasmic portion of the chain corresponds to 3337-3549 (RMSRSKVSGD…LPAWCAPLAH (213 aa)). A helical transmembrane segment spans residues 3550-3570 (GLSLLLVAVAVAVSGWIGASF). Residues 3571–3572 (PP) lie on the Extracellular side of the membrane. Residues 3573–3593 (SVSVMWLLSSSSSFLASFLGW) form a helical membrane-spanning segment. The Cytoplasmic portion of the chain corresponds to 3594–3655 (EPLKVLLEAL…LAKEEARKVK (62 aa)). Residues 3656-3676 (RLHDMLKRLLVYMLFLLVTLL) traverse the membrane as a helical segment. The Extracellular segment spans residues 3677 to 3891 (ANYGDASCHG…RLSTGLSLPL (215 aa)). Residues Asn-3728 and Asn-3780 are each glycosylated (N-linked (GlcNAc...) asparagine). Residues 3892–3912 (LTSVCLLLFALYFSMAEVQTW) form a helical membrane-spanning segment. The Cytoplasmic segment spans residues 3913-3925 (RKDGCACTARPDT). The chain crosses the membrane as a helical span at residues 3926–3946 (WARCLLVILTAATGLVRLAQL). The Extracellular segment spans residues 3947 to 3974 (GIADRQWTHFVQDHPRHFTSFDQVAQLG). A helical membrane pass occupies residues 3975-3995 (SVARGLAASLLFLLLVKAAQQ). At 3996 to 4017 (LRFVRQWSVFGKTLCRALPELM) the chain is on the cytoplasmic side. The helical transmembrane segment at 4018–4038 (GATLGLVLLGVAYAQMAILLI) threads the bilayer. The Extracellular segment spans residues 4039–4080 (SSGADTLYNMARAFLVLCPGARVPTLCPSESWYLSPLLCVGL). A helical transmembrane segment spans residues 4081 to 4100 (WALRVWGALRLGAILLRWRY). The Cytoplasmic segment spans residues 4101-4293 (HALRGELYRP…PNNKVHPSST (193 aa)). Disordered stretches follow at residues 4150 to 4197 (PLPS…STLK) and 4235 to 4293 (SLQG…PSST). Positions 4153–4172 (SRSSRGSKSSPVVLPPSSGS) are enriched in low complexity. At Ser-4156 the chain carries Phosphoserine; by PRKX; in vitro. Positions 4173–4195 (EASHPSTSSSQPDGPSASLSRST) are enriched in polar residues. The stretch at 4210–4241 (ESLLVQFDRLNQATEDVYQLEQQLQSLQGHGH) forms a coiled coil. The span at 4238–4256 (GHGHNGPPSSPSPGCFPGS) shows a compositional bias: low complexity. A compositionally biased stretch (polar residues) spans 4265-4276 (SRASQGLDQTVG).

The protein belongs to the polycystin family. As to quaternary structure, component of the heterotetrameric polycystin channel complex with PKD2; the tetramer contains one PKD1 chain and three PKD2 chains. Interacts with PKD2; the interaction is required for ciliary localization. Interacts with PKD2L1. Interacts with PRKX; involved in differentiation and controlled morphogenesis of the kidney. Interacts (via extracellular domain) with WNT3A, WNT4 and WNT9B. Interacts with WNT5A, DVL1 and DVL2. Interacts with NPHP1 (via SH3 domain). Interacts with BBS1, BBS4, BBS5 and TTC8. Interacts with RGS7. Interacts (via C-terminal domain) with RABEP1; the interaction connects PKD1:PKD2 to GGA1 and ARL3 that mediate the ciliary targeting. Interacts (via the PKD repeats in the N-terminal extracellular region) with EPCIP; the interaction is not dependent on N-glycosylation of either protein. N-glycosylated. In terms of processing, after synthesis, undergoes autoproteolytic cleavage between Leu-3040 and Thr-3041 in the GPS region of the GAIN-B domain. Cleavage at the GPS region occurs through a cis-autoproteolytic mechanism involving an ester-intermediate via N-O acyl rearrangement. This process takes place in the early secretory pathway, depends on initial N-glycosylation, and requires the REJ domain. PKD1 is ubiquitously and incompletely cleaved in wild-type mice, so that uncleaved and cleaved PKD1 molecules coexist. The differential patterns of cleavage during embryonic development, as well as in adult mice, suggest different functions of uncleaved and cleaved molecules.

The protein resides in the cell membrane. It is found in the cell projection. Its subcellular location is the cilium. The protein localises to the endoplasmic reticulum. It localises to the golgi apparatus. The protein resides in the vesicle. It is found in the secreted. Its subcellular location is the extracellular exosome. Component of a heteromeric calcium-permeable ion channel formed by PKD1 and PKD2 that is activated by interaction between PKD1 and a Wnt family member, such as WNT3A and WNT9B. Both PKD1 and PKD2 are required for channel activity. Involved in renal tubulogenesis. Involved in fluid-flow mechanosensation by the primary cilium in renal epithelium. Acts as a regulator of cilium length, together with PKD2. The dynamic control of cilium length is essential in the regulation of mechanotransductive signaling. The cilium length response creates a negative feedback loop whereby fluid shear-mediated deflection of the primary cilium, which decreases intracellular cAMP, leads to cilium shortening and thus decreases flow-induced signaling. May be an ion-channel regulator. Involved in adhesive protein-protein and protein-carbohydrate interactions. Likely to be involved with polycystin-1-interacting protein 1 in the detection, sequestration and exocytosis of senescent mitochondria. This is Polycystin-1 from Mus musculus (Mouse).